An 860-amino-acid chain; its full sequence is Nucleolar MIF4G domain-containing protein 1 (860 aa).

3 disordered regions span residues 1–172, 191–211, and 226–339; these read MAAS…AARK, RCLG…PLSF, and GKNS…EKYI. The interval 1 to 269 is necessary for nucleolar localization and for targeting PPP1CA to the nucleolus; that stretch reads MAASRSAGEA…EEEEEGDVEK (269 aa). Basic residues predominate over residues 20-31; it reads VRMKRRGGRGPR. S57 carries the post-translational modification Phosphoserine. The span at 77–99 shows a compositional bias: basic residues; sequence GGRKSRKELRKEKRHLRKARRLQ. Residues 115–131 are compositionally biased toward basic and acidic residues; that stretch reads GAEEASGHRQDTEERAR. Position 139 is a phosphoserine (S139). Basic residues predominate over residues 142 to 151; that stretch reads RKPRPSRVKA. The segment covering 152 to 169 has biased composition (low complexity); it reads KATAATAKTRPSAAATAA. Acidic residues-rich tracts occupy residues 249–267 and 278–293; these read SDLE…EGDV and AQSE…EQGE. Residues 307 to 310 carry the Required for efficient binding to PPP1CA and for targeting PPP1CA to the nucleolus motif; it reads RVRF. The segment covering 312 to 325 has biased composition (acidic residues); it reads EDEEKSENSSEDGD. Phosphoserine occurs at positions 317, 320, and 321. The MIF4G domain maps to 362-559; it reads KKHVKGLLNR…ETMLALKNND (198 aa). The MI domain maps to 654–770; sequence DIRRNIFCTI…SLSILKVVEF (117 aa).

The protein belongs to the CWC22 family. As to quaternary structure, may interact with EIF4A1, EIF4A2 and EIF4A3. Interacts with PPP1CA and PPP1CC. In terms of tissue distribution, expressed in heart and skeletal muscle.

Its subcellular location is the nucleus. It localises to the nucleolus. Functionally, plays a role in targeting PPP1CA to the nucleolus. The sequence is that of Nucleolar MIF4G domain-containing protein 1 (NOM1) from Homo sapiens (Human).